We begin with the raw amino-acid sequence, 89 residues long: Small ribosomal subunit protein uS15 (89 aa).

It belongs to the universal ribosomal protein uS15 family. In terms of assembly, part of the 30S ribosomal subunit. Forms a bridge to the 50S subunit in the 70S ribosome, contacting the 23S rRNA.

Its function is as follows. One of the primary rRNA binding proteins, it binds directly to 16S rRNA where it helps nucleate assembly of the platform of the 30S subunit by binding and bridging several RNA helices of the 16S rRNA. In terms of biological role, forms an intersubunit bridge (bridge B4) with the 23S rRNA of the 50S subunit in the ribosome. In Oenococcus oeni (strain ATCC BAA-331 / PSU-1), this protein is Small ribosomal subunit protein uS15.